Here is a 1132-residue protein sequence, read N- to C-terminus: BTB/POZ domain-containing protein 7 (1132 aa).

The span at 1–10 (MGANASNYPH) shows a compositional bias: polar residues. The tract at residues 1–24 (MGANASNYPHSCSPRVGGNSQAQQ) is disordered. A lipid anchor (N-myristoyl glycine) is attached at Gly-2. 2 BTB domains span residues 142–211 (TDVD…GMED) and 247–341 (YDVV…DLSV). The BACK domain maps to 413–479 (YGSKWVHRQA…WGEHQLMKRI (67 aa)). Phosphoserine is present on Ser-722. Disordered stretches follow at residues 897 to 1019 (LSQS…HLHR) and 1035 to 1132 (QRSD…KSAL). Basic residues predominate over residues 918–927 (RHTHTSRKKH). Composition is skewed to basic and acidic residues over residues 928-939 (TLEQKTDTRENP), 1000-1019 (KKQE…HLHR), 1083-1093 (PEERSGRRLAD), and 1105-1114 (TDLEREDSIS). At Ser-1012 the chain carries Phosphoserine.

The protein localises to the nucleus. Functionally, acts as a mediator of epithelial dynamics and organ branching by promoting cleft progression. Induced following accumulation of fibronectin in forming clefts, leading to local expression of the cell-scattering SNAIL2 and suppression of E-cadherin levels, thereby altering cell morphology and reducing cell-cell adhesion. This stimulates cell separation at the base of forming clefts by local, dynamic intercellular gap formation and promotes cleft progression. This chain is BTB/POZ domain-containing protein 7 (BTBD7), found in Homo sapiens (Human).